Consider the following 207-residue polypeptide: Outer-membrane lipoprotein LolB (207 aa).

A signal peptide spans 1–21 (MPMRKRHFYRLLPLASLLLAA). The N-palmitoyl cysteine moiety is linked to residue C22. C22 carries S-diacylglycerol cysteine lipidation.

The protein belongs to the LolB family. As to quaternary structure, monomer.

The protein resides in the cell outer membrane. Plays a critical role in the incorporation of lipoproteins in the outer membrane after they are released by the LolA protein. The chain is Outer-membrane lipoprotein LolB from Yersinia pseudotuberculosis serotype IB (strain PB1/+).